The sequence spans 488 residues: UDP-glycosyltransferase 92A1 (488 aa).

UDP-alpha-D-glucose-binding positions include S292, A358 to Q360, H375 to E383, and A397 to Q400.

This sequence belongs to the UDP-glycosyltransferase family.

The chain is UDP-glycosyltransferase 92A1 (UGT92A1) from Arabidopsis thaliana (Mouse-ear cress).